The following is a 956-amino-acid chain: DNA polymerase I (956 aa).

Residues 209 to 296 (VTVRQWVDYR…VTDLPLDIEF (88 aa)) enclose the 5'-3' exonuclease domain.

The protein belongs to the DNA polymerase type-A family. In terms of assembly, single-chain monomer with multiple functions.

It catalyses the reaction DNA(n) + a 2'-deoxyribonucleoside 5'-triphosphate = DNA(n+1) + diphosphate. Its function is as follows. A DNA polymerase, required for DNA repair after DNA damage induced by ionizing radiation (IR); this is not the major DNA polymerase. Following severe irradiation (7 kGy of gamma irradiation) genomic DNA is fragmented. DNA is progressively degraded for the first 1.5 hours after IR, in a step promoted by RecA and counterbalanced by DNA Pol I and Pol III, followed by massive DNA synthesis and genome reassembly in the next hour. Optimal priming of DNA synthesis requires both RecA and RadA, Pol III initiates DNA synthesis while both Pol I and Pol III are required for its continuation. May also have 5'-3' exonuclease activity. The chain is DNA polymerase I (polA) from Deinococcus radiodurans (strain ATCC 13939 / DSM 20539 / JCM 16871 / CCUG 27074 / LMG 4051 / NBRC 15346 / NCIMB 9279 / VKM B-1422 / R1).